Reading from the N-terminus, the 392-residue chain is Formate-dependent phosphoribosylglycinamide formyltransferase (392 aa).

N(1)-(5-phospho-beta-D-ribosyl)glycinamide contacts are provided by residues 15–16 (EL) and Glu75. Residues Arg107, Lys148, 153–158 (SSGKGQ), 188–191 (EEFL), and Glu196 contribute to the ATP site. Residues 112 to 302 (DLASGELGLH…EFELHLRAVL (191 aa)) form the ATP-grasp domain. Mg(2+) is bound by residues Glu261 and Glu273. N(1)-(5-phospho-beta-D-ribosyl)glycinamide-binding positions include Asp280, Lys350, and 357–358 (RR).

The protein belongs to the PurK/PurT family. In terms of assembly, homodimer.

The catalysed reaction is N(1)-(5-phospho-beta-D-ribosyl)glycinamide + formate + ATP = N(2)-formyl-N(1)-(5-phospho-beta-D-ribosyl)glycinamide + ADP + phosphate + H(+). It functions in the pathway purine metabolism; IMP biosynthesis via de novo pathway; N(2)-formyl-N(1)-(5-phospho-D-ribosyl)glycinamide from N(1)-(5-phospho-D-ribosyl)glycinamide (formate route): step 1/1. Its function is as follows. Involved in the de novo purine biosynthesis. Catalyzes the transfer of formate to 5-phospho-ribosyl-glycinamide (GAR), producing 5-phospho-ribosyl-N-formylglycinamide (FGAR). Formate is provided by PurU via hydrolysis of 10-formyl-tetrahydrofolate. In Synechococcus sp. (strain CC9902), this protein is Formate-dependent phosphoribosylglycinamide formyltransferase.